Reading from the N-terminus, the 420-residue chain is Glucose-1-phosphate adenylyltransferase (420 aa).

Alpha-D-glucose 1-phosphate is bound by residues Tyr-107, Gly-172, 187–188, and Ser-205; that span reads EK.

It belongs to the bacterial/plant glucose-1-phosphate adenylyltransferase family. As to quaternary structure, homotetramer.

It carries out the reaction alpha-D-glucose 1-phosphate + ATP + H(+) = ADP-alpha-D-glucose + diphosphate. It functions in the pathway glycan biosynthesis; glycogen biosynthesis. Functionally, involved in the biosynthesis of ADP-glucose, a building block required for the elongation reactions to produce glycogen. Catalyzes the reaction between ATP and alpha-D-glucose 1-phosphate (G1P) to produce pyrophosphate and ADP-Glc. The sequence is that of Glucose-1-phosphate adenylyltransferase from Rhodopseudomonas palustris (strain HaA2).